The primary structure comprises 121 residues: Two-component response regulator ORR12 (121 aa).

The 117-residue stretch at 5-121 (HVLVVDDTLV…VDLPRILNYI (117 aa)) folds into the Response regulatory domain. 4-aspartylphosphate is present on D55.

This sequence belongs to the ARR family. Type-A subfamily. In terms of processing, two-component system major event consists of a His-to-Asp phosphorelay between a sensor histidine kinase (HK) and a response regulator (RR). In plants, the His-to-Asp phosphorelay involves an additional intermediate named Histidine-containing phosphotransfer protein (HPt). This multistep phosphorelay consists of a His-Asp-His-Asp sequential transfer of a phosphate group between first a His and an Asp of the HK protein, followed by the transfer to a conserved His of the HPt protein and finally the transfer to an Asp in the receiver domain of the RR protein. As to expression, expressed in flowers and panicles.

Functions as a response regulator involved in His-to-Asp phosphorelay signal transduction system. Phosphorylation of the Asp residue in the receiver domain activates the ability of the protein to promote the transcription of target genes. Type-A response regulators seem to act as negative regulators of the cytokinin signaling. The polypeptide is Two-component response regulator ORR12 (Oryza sativa subsp. japonica (Rice)).